The sequence spans 506 residues: Transcriptional coactivator YAP1 (506 aa).

A compositionally biased stretch (pro residues) spans 1 to 38; sequence MDPGPPPPAAPPQAQGPPSAPPPPGQAPPSAPGPPAPP. The disordered stretch occupies residues 1 to 60; it reads MDPGPPPPAAPPQAQGPPSAPPPPGQAPPSAPGPPAPPGSQAAPQAPPAGHQIVHVRGDS. The segment covering 39–50 has biased composition (low complexity); it reads GSQAAPQAPPAG. Ser60 carries the post-translational modification Phosphoserine. Thr62 is subject to Phosphothreonine. Positions 90–112 are disordered; sequence LPDSFFKPPEPKAHSRQASTDAG. Phosphoserine occurs at positions 104 and 108. A phosphothreonine mark is found at Thr109 and Thr118. 4 positions are modified to phosphoserine: Ser126, Ser127, Ser130, and Ser137. The interval 132–160 is disordered; it reads QLGAVSPGTLTPTGVSSGPAAAPSAQHLR. Over residues 147-156 the composition is skewed to low complexity; the sequence is SSGPAAAPSA. Ser163 carries the post-translational modification Phosphoserine. 2 WW domains span residues 170–204 and 230–263; these read VPLP…PRKA and PLPD…PRLD. Residues Ser273, Ser288, Ser369, Ser373, Ser384, Ser390, Ser399, Ser402, and Ser405 each carry the phosphoserine modification. 2 disordered regions span residues 274–307 and 356–416; these read QSAP…MRLQ and TLEQ…RTPD. A compositionally biased stretch (pro residues) spans 279–289; the sequence is KQPPPLAPQSP. The interval 290–506 is transactivation domain; the sequence is PGVLGGGGSS…LDKESFLTWL (217 aa). Positions 371 to 393 are enriched in polar residues; the sequence is GMSQELRTMTTSGSDPFLNSGTY. Over residues 401–411 the composition is skewed to polar residues; sequence DSGLSMSSYSV. Tyr409 carries the post-translational modification Phosphotyrosine. Phosphothreonine is present on Thr414.

Belongs to the YAP1 family. In terms of assembly, binds to the SH3 domain of the YES kinase. Binds to WBP1 and WBP2. Binds, in vitro, through the WW1 domain, to neural isoforms of ENAH that contain the PPSY motif. The phosphorylated form interacts with YWHAB. Interacts (via WW domains) with LATS1 (via PPxY motif 2). Interacts with LATS2. Interacts with TEAD1, TEAD2 and TEAD3. Interacts wih TEAD4. Interacts with TP73. Interacts with RUNX1. Interacts with HCK. Interacts (via WW domains) with PTPN14 (via PPxY motif 2); this interaction leads to the cytoplasmic sequestration of YAP1 and inhibits its transcriptional coactivator activity. Interacts (when phosphorylated at Ser-112) with SMAD2, SMAD3 and WWTR1. Interacts with PRRG2 (via cytoplasmic domain). Interacts (via WW domains) with PRRG4 (via cytoplasmic domain). Interacts (phosphorylated) with CLDN18; the interaction sequesters YAP1 away from the nucleus and thereby restricts transcription of YAP1 target genes. Interacts with SMAD1. Interacts with AMOT; the interaction facilitates translocation of YAP1 to the cytoplasm and tight junctions. Interacts with AMOTL2, the interaction is required for ubiquitination of AMOTL2 and localization of YAP1 to tight junctions. Post-translationally, phosphorylated by LATS1 and LATS2; leading to cytoplasmic translocation and inactivation. Phosphorylated by ABL1; leading to YAP1 stabilization, enhanced interaction with TP73 and recruitment onto proapoptotic genes; in response to DNA damage. Phosphorylation at Ser-402 and Ser-405 by CK1 is triggered by previous phosphorylation at Ser-399 by LATS proteins and leads to YAP1 ubiquitination by SCF(beta-TRCP) E3 ubiquitin ligase and subsequent degradation. Phosphorylated at Thr-118, Ser-137, Ser-369 and Thr-414 by MAPK8/JNK1 and MAPK9/JNK2, which is required for the regulation of apoptosis by YAP1. Phosphorylated in the nucleus by PRP4K; phosphorylation leads to nuclear exclusion. Ubiquitinated by SCF(beta-TRCP) E3 ubiquitin ligase.

The protein localises to the cytoplasm. The protein resides in the nucleus. Its subcellular location is the cell junction. It is found in the tight junction. Functionally, transcriptional regulator with dual roles as a coactivator and corepressor. Critical downstream regulatory target in the Hippo signaling pathway, crucial for organ size control and tumor suppression by restricting proliferation and promoting apoptosis. The Hippo signaling pathway core involves a kinase cascade featuring STK3/MST2 and STK4/MST1, along with its regulatory partner SAV1, which phosphorylates and activates LATS1/2 in complex with their regulatory protein, MOB1. This activation leads to the phosphorylation and inactivation of the YAP1 oncoprotein and WWTR1/TAZ. Phosphorylation of YAP1 by LATS1/2 prevents its nuclear translocation, thereby regulating the expression of its target genes. The transcriptional regulation of gene expression requires TEAD transcription factors and modulates cell growth, anchorage-independent growth, and induction of epithelial-mesenchymal transition (EMT). Plays a key role in tissue tension and 3D tissue shape by regulating the cortical actomyosin network, acting via ARHGAP18, a Rho GTPase activating protein that suppresses F-actin polymerization. It also suppresses ciliogenesis by acting as a transcriptional corepressor of TEAD4 target genes AURKA and PLK1. In conjunction with WWTR1, regulates TGFB1-dependent SMAD2 and SMAD3 nuclear accumulation. Synergizes with WBP2 to enhance PGR activity. This chain is Transcriptional coactivator YAP1 (YAP1), found in Canis lupus familiaris (Dog).